Here is a 253-residue protein sequence, read N- to C-terminus: MLSRIKQGIKTKRSSSSSSSRSKTGDEDSSLMLRWVYDNDPPLKQTDTFQYLMAPTAPTDKASSSYIATTYKVDCKVEIISRASIRNFDELINIASCLIDSYDGQLLIKPWIITVYLTIITHLVKEPDTHGVRSSVNRYHNGFNEILTLYINKNFAPENKKYSFKKNLSTTHKGNQCNIIISIDLLPTDRKGKSIKDVYEVKMPDNREIPNFQQMLKPYNLKVKEKNGKYLISHKMSSSDDSIDVSDSDENEF.

Positions 1–26 (MLSRIKQGIKTKRSSSSSSSRSKTGD) are disordered. Positions 55-58 (PTAP) match the PTAP/PSAP motif motif.

Homomultimer. Interacts with viral nucleocapsid. Interacts with host TSG101.

The protein localises to the virion membrane. The protein resides in the host endomembrane system. It is found in the host nucleus membrane. Functionally, plays a major role in assembly and budding of virion, by recruiting cellular partners of the ESCRT complexes that play a key role in releasing the budding particle from the host membrane. Condensates the ribonucleocapsid core during virus assembly. This is Matrix protein (M) from Bos taurus (Bovine).